A 108-amino-acid polypeptide reads, in one-letter code: UPF0145 protein Npun_F4817 (108 aa).

Belongs to the UPF0145 family.

This Nostoc punctiforme (strain ATCC 29133 / PCC 73102) protein is UPF0145 protein Npun_F4817.